Reading from the N-terminus, the 192-residue chain is Ion-translocating oxidoreductase complex subunit B (192 aa).

The tract at residues methionine 1–serine 26 is hydrophobic. The 4Fe-4S domain maps to glutamate 32–valine 91. The [4Fe-4S] cluster site is built by cysteine 49, cysteine 52, cysteine 57, cysteine 74, cysteine 117, cysteine 120, cysteine 123, cysteine 127, cysteine 147, cysteine 150, cysteine 153, and cysteine 157. 4Fe-4S ferredoxin-type domains follow at residues methionine 108–arginine 137 and alanine 138–valine 167.

Belongs to the 4Fe4S bacterial-type ferredoxin family. RnfB subfamily. In terms of assembly, the complex is composed of six subunits: RsxA, RsxB, RsxC, RsxD, RsxE and RsxG. Requires [4Fe-4S] cluster as cofactor.

The protein localises to the cell inner membrane. Its function is as follows. Part of a membrane-bound complex that couples electron transfer with translocation of ions across the membrane. Required to maintain the reduced state of SoxR. The protein is Ion-translocating oxidoreductase complex subunit B of Salmonella arizonae (strain ATCC BAA-731 / CDC346-86 / RSK2980).